Consider the following 726-residue polypeptide: Catalase-peroxidase (726 aa).

A disordered region spans residues 1–33 (MSTSDDIHNTTATGKCPFHQGGHDQSAGAGTTT). The segment at residues 105–226 (WHGAGTYRSI…LGATEMGLIY (122 aa)) is a cross-link (tryptophyl-tyrosyl-methioninium (Trp-Tyr) (with M-252)). His106 (proton acceptor) is an active-site residue. The segment at residues 226–252 (YVNPEGPDHSGEPLSAAAAIRATFGNM) is a cross-link (tryptophyl-tyrosyl-methioninium (Tyr-Met) (with W-105)). Residue His267 coordinates heme b.

This sequence belongs to the peroxidase family. Peroxidase/catalase subfamily. Homodimer or homotetramer. The cofactor is heme b. Post-translationally, formation of the three residue Trp-Tyr-Met cross-link is important for the catalase, but not the peroxidase activity of the enzyme.

It catalyses the reaction H2O2 + AH2 = A + 2 H2O. The catalysed reaction is 2 H2O2 = O2 + 2 H2O. Functionally, bifunctional enzyme with both catalase and broad-spectrum peroxidase activity. This chain is Catalase-peroxidase, found in Shigella boydii serotype 18 (strain CDC 3083-94 / BS512).